The following is a 385-amino-acid chain: Acetylornithine aminotransferase (385 aa).

Pyridoxal 5'-phosphate contacts are provided by residues 94–95 and Phe-126; that span reads GT. Residue Arg-129 coordinates N(2)-acetyl-L-ornithine. A pyridoxal 5'-phosphate-binding site is contributed by 211 to 214; it reads DEVQ. Lys-240 bears the N6-(pyridoxal phosphate)lysine mark. Thr-267 contributes to the N(2)-acetyl-L-ornithine binding site. Thr-268 contributes to the pyridoxal 5'-phosphate binding site.

This sequence belongs to the class-III pyridoxal-phosphate-dependent aminotransferase family. ArgD subfamily. As to quaternary structure, homodimer. The cofactor is pyridoxal 5'-phosphate.

The protein localises to the cytoplasm. The catalysed reaction is N(2)-acetyl-L-ornithine + 2-oxoglutarate = N-acetyl-L-glutamate 5-semialdehyde + L-glutamate. It functions in the pathway amino-acid biosynthesis; L-arginine biosynthesis; N(2)-acetyl-L-ornithine from L-glutamate: step 4/4. In Thermotoga maritima (strain ATCC 43589 / DSM 3109 / JCM 10099 / NBRC 100826 / MSB8), this protein is Acetylornithine aminotransferase.